A 182-amino-acid chain; its full sequence is Large ribosomal subunit protein uL5 (182 aa).

It belongs to the universal ribosomal protein uL5 family. Part of the 50S ribosomal subunit; part of the 5S rRNA/L5/L18/L25 subcomplex. Contacts the 5S rRNA and the P site tRNA. Forms a bridge to the 30S subunit in the 70S ribosome.

Its function is as follows. This is one of the proteins that bind and probably mediate the attachment of the 5S RNA into the large ribosomal subunit, where it forms part of the central protuberance. In the 70S ribosome it contacts protein S13 of the 30S subunit (bridge B1b), connecting the 2 subunits; this bridge is implicated in subunit movement. Contacts the P site tRNA; the 5S rRNA and some of its associated proteins might help stabilize positioning of ribosome-bound tRNAs. This chain is Large ribosomal subunit protein uL5, found in Coxiella burnetii (strain CbuG_Q212) (Coxiella burnetii (strain Q212)).